Reading from the N-terminus, the 279-residue chain is Shikimate dehydrogenase (NADP(+)) (279 aa).

Shikimate-binding positions include 17 to 19 (SQS) and Thr64. Lys68 acts as the Proton acceptor in catalysis. Positions 89 and 105 each coordinate shikimate. Residues 130–134 (GAGGA) and Leu218 contribute to the NADP(+) site. A shikimate-binding site is contributed by Tyr220. Position 242 (Gly242) interacts with NADP(+).

It belongs to the shikimate dehydrogenase family. Homodimer.

It carries out the reaction shikimate + NADP(+) = 3-dehydroshikimate + NADPH + H(+). Its pathway is metabolic intermediate biosynthesis; chorismate biosynthesis; chorismate from D-erythrose 4-phosphate and phosphoenolpyruvate: step 4/7. Functionally, involved in the biosynthesis of the chorismate, which leads to the biosynthesis of aromatic amino acids. Catalyzes the reversible NADPH linked reduction of 3-dehydroshikimate (DHSA) to yield shikimate (SA). This is Shikimate dehydrogenase (NADP(+)) from Methylococcus capsulatus (strain ATCC 33009 / NCIMB 11132 / Bath).